The primary structure comprises 217 residues: Probable transaldolase (217 aa).

Lysine 83 functions as the Schiff-base intermediate with substrate in the catalytic mechanism.

The protein belongs to the transaldolase family. Type 3B subfamily.

The protein localises to the cytoplasm. It catalyses the reaction D-sedoheptulose 7-phosphate + D-glyceraldehyde 3-phosphate = D-erythrose 4-phosphate + beta-D-fructose 6-phosphate. It participates in carbohydrate degradation; pentose phosphate pathway; D-glyceraldehyde 3-phosphate and beta-D-fructose 6-phosphate from D-ribose 5-phosphate and D-xylulose 5-phosphate (non-oxidative stage): step 2/3. Functionally, transaldolase is important for the balance of metabolites in the pentose-phosphate pathway. This is Probable transaldolase from Bartonella bacilliformis (strain ATCC 35685 / KC583 / Herrer 020/F12,63).